A 294-amino-acid chain; its full sequence is UDP-3-O-acyl-N-acetylglucosamine deacetylase (294 aa).

Zn(2+) is bound by residues H75, H232, and D236. H259 (proton donor) is an active-site residue.

It belongs to the LpxC family. Zn(2+) serves as cofactor.

The enzyme catalyses a UDP-3-O-[(3R)-3-hydroxyacyl]-N-acetyl-alpha-D-glucosamine + H2O = a UDP-3-O-[(3R)-3-hydroxyacyl]-alpha-D-glucosamine + acetate. The protein operates within glycolipid biosynthesis; lipid IV(A) biosynthesis; lipid IV(A) from (3R)-3-hydroxytetradecanoyl-[acyl-carrier-protein] and UDP-N-acetyl-alpha-D-glucosamine: step 2/6. Catalyzes the hydrolysis of UDP-3-O-myristoyl-N-acetylglucosamine to form UDP-3-O-myristoylglucosamine and acetate, the committed step in lipid A biosynthesis. The chain is UDP-3-O-acyl-N-acetylglucosamine deacetylase from Campylobacter jejuni subsp. jejuni serotype O:23/36 (strain 81-176).